The following is a 457-amino-acid chain: Phenylalanine-4-hydroxylase (457 aa).

An ACT domain is found at 31 to 108 (TIVFTLREKA…EKKVLVQDWN (78 aa)). 3 residues coordinate Fe cation: His-285, His-290, and Glu-330.

The protein belongs to the biopterin-dependent aromatic amino acid hydroxylase family. As to quaternary structure, homotetramer. The cofactor is Fe(2+). Expressed in the seam cells of the lateral hypodermis, in the ventral hypodermis and in the hyp7 hypodermal syncytium, in hypodermal cells in the tail and in body wall muscle cells (at protein level).

The protein localises to the cytoplasm. It carries out the reaction (6R)-L-erythro-5,6,7,8-tetrahydrobiopterin + L-phenylalanine + O2 = (4aS,6R)-4a-hydroxy-L-erythro-5,6,7,8-tetrahydrobiopterin + L-tyrosine. It catalyses the reaction (6R)-L-erythro-5,6,7,8-tetrahydrobiopterin + L-tryptophan + O2 = 5-hydroxy-L-tryptophan + (4aS,6R)-4a-hydroxy-L-erythro-5,6,7,8-tetrahydrobiopterin. It participates in amino-acid degradation; L-phenylalanine degradation; acetoacetate and fumarate from L-phenylalanine: step 1/6. Its activity is regulated as follows. Inhibited by tetrahydrobiopterin. Unlike its mammalian orthologs, pah-1 does not exhibit allosteric binding behavior for phenylalanine. Its function is as follows. Catalyzes the hydroxylation of L-phenylalanine to L-tyrosine. Catalyzes the hydroxylation of tryptophan to 5-hydroxy-L-tryptophan. Plays a role in the biosynthesis of a melanin-like cuticle pigment. The polypeptide is Phenylalanine-4-hydroxylase (Caenorhabditis elegans).